We begin with the raw amino-acid sequence, 492 residues long: MPTNGLHQVLKIQFGLVNDADRYLTAESFGFKVNASAASLKRKQIWVLEPDPGQGTAVLFRSSHLGRYLSAEEDGRVACEMDQPGRDCRFLVLPQPDGRWVLQSEPHGRFFGGIEDRLSCFATAISPAELWTVHLAIHPQAHLLSVSRRRYVHLCLQEDEMAADGDMPWGVDALVTLIFQSRRYCLKSYDSRYLRSDGRLVWEPEAHACYTLEFKAGKLAFKDCDGRYLAPVGPAGTLKAGRNTRPSKDELFDLEQSHPQVVLVAANRRYISVRQGINVSANQDEELGHETFLMQIDQETKKCTFYSSTGGYWTLVTHGGIQATATQVSANTMFEIEWHGRRVALKASNGRFVCMKKNGQLAAISDFVGEDELFTLKLINRPLLVLRGLDGFVCHRRGSNQLDTNRSTYDVFHLSFRDGAYQIRGRGGGFWYTGSHGSVCSDGDLAEDFLFEFRERGRLAIRALSGKYLRGGASGLLRADADLPVGEALWEY.

This sequence belongs to the fascin family. As to expression, expressed in the inner ear. Abundant in the utricle.

It localises to the cytoplasm. Its subcellular location is the cytoskeleton. It is found in the cell projection. The protein resides in the stereocilium. Its function is as follows. Acts as an actin bundling protein. May play a pivotal role in photoreceptor cell-specific events, such as disk morphogenesis. Important for maintaining functional hair-cell bundles in the inner ear. May stiffen the longer stereocilia of hair-cell bundles in the inner ear enabling better force transmission to tip links. This Mus musculus (Mouse) protein is Fascin-2 (Fscn2).